The primary structure comprises 250 residues: Putative endonuclease (250 aa).

Putative endonuclease. The polypeptide is Putative endonuclease (Escherichia coli (Enterobacteria phage T5)).